Here is a 154-residue protein sequence, read N- to C-terminus: Transcriptional repressor NrdR (154 aa).

Residues 3–34 (CPTCQYNGTRVVDSRPADDGNSIRRRRECEKC) fold into a zinc finger. Residues 49–139 (LIVVKKDGAR…VYRQFKDISV (91 aa)) form the ATP-cone domain.

Belongs to the NrdR family. It depends on Zn(2+) as a cofactor.

In terms of biological role, negatively regulates transcription of bacterial ribonucleotide reductase nrd genes and operons by binding to NrdR-boxes. This chain is Transcriptional repressor NrdR, found in Listeria monocytogenes serotype 4a (strain HCC23).